The chain runs to 142 residues: Large ribosomal subunit protein uL13 (142 aa).

Belongs to the universal ribosomal protein uL13 family. In terms of assembly, part of the 50S ribosomal subunit.

This protein is one of the early assembly proteins of the 50S ribosomal subunit, although it is not seen to bind rRNA by itself. It is important during the early stages of 50S assembly. This Dechloromonas aromatica (strain RCB) protein is Large ribosomal subunit protein uL13.